A 602-amino-acid polypeptide reads, in one-letter code: DNA mismatch repair protein MutL (602 aa).

The protein belongs to the DNA mismatch repair MutL/HexB family.

Functionally, this protein is involved in the repair of mismatches in DNA. It is required for dam-dependent methyl-directed DNA mismatch repair. May act as a 'molecular matchmaker', a protein that promotes the formation of a stable complex between two or more DNA-binding proteins in an ATP-dependent manner without itself being part of a final effector complex. This chain is DNA mismatch repair protein MutL, found in Geotalea uraniireducens (strain Rf4) (Geobacter uraniireducens).